Reading from the N-terminus, the 410-residue chain is Cysteine desulfurase IscS (410 aa).

Pyridoxal 5'-phosphate-binding positions include 80–81 (AT), N160, Q188, and 208–210 (SGH). N6-(pyridoxal phosphate)lysine is present on K211. Pyridoxal 5'-phosphate is bound at residue T248. C334 serves as the catalytic Cysteine persulfide intermediate. C334 serves as a coordination point for [2Fe-2S] cluster.

It belongs to the class-V pyridoxal-phosphate-dependent aminotransferase family. NifS/IscS subfamily. In terms of assembly, homodimer. Forms a heterotetramer with IscU, interacts with other sulfur acceptors. The cofactor is pyridoxal 5'-phosphate.

Its subcellular location is the cytoplasm. The enzyme catalyses (sulfur carrier)-H + L-cysteine = (sulfur carrier)-SH + L-alanine. Its pathway is cofactor biosynthesis; iron-sulfur cluster biosynthesis. In terms of biological role, master enzyme that delivers sulfur to a number of partners involved in Fe-S cluster assembly, tRNA modification or cofactor biosynthesis. Catalyzes the removal of elemental sulfur atoms from cysteine to produce alanine. Functions as a sulfur delivery protein for Fe-S cluster synthesis onto IscU, an Fe-S scaffold assembly protein, as well as other S acceptor proteins. The protein is Cysteine desulfurase IscS of Rickettsia prowazekii (strain Madrid E).